The primary structure comprises 185 residues: GTP cyclohydrolase 1 (185 aa).

Residues cysteine 76, histidine 79, and cysteine 147 each coordinate Zn(2+).

Belongs to the GTP cyclohydrolase I family. As to quaternary structure, toroid-shaped homodecamer, composed of two pentamers of five dimers.

It catalyses the reaction GTP + H2O = 7,8-dihydroneopterin 3'-triphosphate + formate + H(+). It participates in cofactor biosynthesis; 7,8-dihydroneopterin triphosphate biosynthesis; 7,8-dihydroneopterin triphosphate from GTP: step 1/1. The protein is GTP cyclohydrolase 1 of Clostridium perfringens (strain 13 / Type A).